Reading from the N-terminus, the 671-residue chain is Phospholipid:diacylglycerol acyltransferase 1 (671 aa).

The disordered stretch occupies residues 1-46 (MPLIHRKKPTEKPSTPPSEEVVHDEDSQKKPHESSKSHHKKSNGGG). Residues 1-54 (MPLIHRKKPTEKPSTPPSEEVVHDEDSQKKPHESSKSHHKKSNGGGKWSCIDSC) lie on the Cytoplasmic side of the membrane. Residues 20 to 36 (EVVHDEDSQKKPHESSK) show a composition bias toward basic and acidic residues. Residues 55-75 (CWFIGCVCVTWWFLLFLYNAM) form a helical membrane-spanning segment. Residues 76-671 (PASFPQYVTE…EWSERIDLKL (596 aa)) lie on the Lumenal side of the membrane. Asn161 is a glycosylation site (N-linked (GlcNAc...) asparagine). Ser254 serves as the catalytic Acyl-ester intermediate. Residues Asn381 and Asn434 are each glycosylated (N-linked (GlcNAc...) asparagine). Active-site charge relay system residues include Asp573 and His626. Asn647 carries an N-linked (GlcNAc...) asparagine glycan.

The protein belongs to the AB hydrolase superfamily. Lipase family. As to expression, ubiquitous. Highest expression in young developing seeds.

The protein resides in the membrane. It carries out the reaction a glycerophospholipid + a 1,2-diacyl-sn-glycerol = a monoacylglycerophospholipid + a triacyl-sn-glycerol. The protein operates within glycerolipid metabolism; triacylglycerol biosynthesis. In terms of biological role, triacylglycerol formation by an acyl-CoA independent pathway. The enzyme preferentially transfers acyl groups from the sn-2 position of a phospholipid to diacylglycerol, thus forming an sn-1-lysophospholipid. Involved in epoxy and hydroxy fatty acid accumulation in seeds. Has complementary functions with DAG1 that are essential for triacylglycerol synthesis and normal development of both seeds and pollen. The protein is Phospholipid:diacylglycerol acyltransferase 1 (PDAT1) of Arabidopsis thaliana (Mouse-ear cress).